The sequence spans 385 residues: Polyketide synthase 1 (385 aa).

Residue cysteine 157 is part of the active site.

The protein belongs to the thiolase-like superfamily. Chalcone/stilbene synthases family. Expressed in glandular trichomes.

Its subcellular location is the cytoplasm. In terms of biological role, polyketide synthase responsible for the biosynthesis of secondary metabolites. This is Polyketide synthase 1 (PKSG1) from Cannabis sativa (Hemp).